The primary structure comprises 310 residues: Cytochrome f (310 aa).

Residues 1-23 form the signal peptide; that stretch reads MRRLIPILLGSLVLSLSILVAPA. Positions 28, 48, 51, and 52 each coordinate heme. A helical membrane pass occupies residues 277-297; it reads IYGLLAFFVAVSLAQILLVLK.

Belongs to the cytochrome f family. As to quaternary structure, the 4 large subunits of the cytochrome b6-f complex are cytochrome b6, subunit IV (17 kDa polypeptide, PetD), cytochrome f and the Rieske protein, while the 4 small subunits are PetG, PetL, PetM and PetN. The complex functions as a dimer. Requires heme as cofactor.

The protein localises to the cellular thylakoid membrane. Its function is as follows. Component of the cytochrome b6-f complex, which mediates electron transfer between photosystem II (PSII) and photosystem I (PSI), cyclic electron flow around PSI, and state transitions. This chain is Cytochrome f, found in Prochlorococcus marinus (strain MIT 9303).